We begin with the raw amino-acid sequence, 245 residues long: 14-3-3 protein zeta/delta (245 aa).

Met1 carries the post-translational modification N-acetylmethionine. Lys3 carries the N6-acetyllysine modification. Phosphoserine; by PKA is present on Ser58. At Lys68 the chain carries N6-acetyllysine. Ser184, Ser207, and Ser210 each carry phosphoserine. The residue at position 232 (Thr232) is a Phosphothreonine; by CK1.

This sequence belongs to the 14-3-3 family. As to quaternary structure, homodimer. Heterodimerizes with YWHAE. Homo- and heterodimerization is inhibited by phosphorylation on Ser-58. Interacts with FOXO4, NOXA1, SSH1 ARHGEF2, CDK16 and BSPRY. Interacts with WEE1 (C-terminal). Interacts with MLF1 (phosphorylated form); the interaction retains it in the cytoplasm. Interacts with BAX; the interaction occurs in the cytoplasm. Under stress conditions, MAPK8-mediated phosphorylation releases BAX to mitochondria. Interacts with TP53; the interaction enhances p53 transcriptional activity. The Ser-58 phosphorylated form inhibits this interaction and p53 transcriptional activity. Interacts with ABL1 (phosphorylated form); the interaction retains ABL1 in the cytoplasm. Interacts with PKA-phosphorylated AANAT; the interaction modulates AANAT enzymatic activity by increasing affinity for arylalkylamines and acetyl-CoA and protecting the enzyme from dephosphorylation and proteasomal degradation. It may also prevent thiol-dependent inactivation. Interacts with AKT1; the interaction phosphorylates YWHAZ and modulates dimerization. Interacts with GAB2. Interacts with BCL2L11, SAMSN1 and TLK2. Interacts with phosphorylated RAF1; the interaction is inhibited when YWHAZ is phosphorylated on Thr-232. Interacts with Thr-phosphorylated ITGB2. Interacts with the 'Thr-369' phosphorylated form of DAPK2. Interacts with PI4KB, TBC1D22A and TBC1D22B. Interacts with ZFP36L1 (via phosphorylated form); this interaction occurs in a p38 MAPK- and AKT-signaling pathways. Interacts with SLITRK1. Interacts with AK5, LDB1, MADD, MARK3, PDE1A and SMARCB1. Interacts with YWHAZ. Interacts with MEFV. Interacts with ADAM22 (via C-terminus). The delta, brain-specific form differs from the zeta form in being phosphorylated. Phosphorylation on Ser-184 by MAPK8; promotes dissociation of BAX and translocation of BAX to mitochondria. Phosphorylation on Thr-232; inhibits binding of RAF1. Phosphorylated on Ser-58 by PKA and protein kinase C delta type catalytic subunit in a sphingosine-dependent fashion. Phosphorylation on Ser-58 by PKA; disrupts homodimerization and heterodimerization with YHAE and TP53.

Its subcellular location is the cytoplasm. It is found in the melanosome. Functionally, adapter protein implicated in the regulation of a large spectrum of both general and specialized signaling pathways. Binds to a large number of partners, usually by recognition of a phosphoserine or phosphothreonine motif. Binding generally results in the modulation of the activity of the binding partner. Promotes cytosolic retention and inactivation of TFEB transcription factor by binding to phosphorylated TFEB. Induces ARHGEF7 activity on RAC1 as well as lamellipodia and membrane ruffle formation. In neurons, regulates spine maturation through the modulation of ARHGEF7 activity. This Bos taurus (Bovine) protein is 14-3-3 protein zeta/delta (YWHAZ).